The sequence spans 98 residues: DNA-binding protein Fis (98 aa).

Positions 74 to 93 form a DNA-binding region, H-T-H motif; it reads QTRAALMMGINRGTLRKKLK.

The protein belongs to the transcriptional regulatory Fis family. Homodimer.

Its function is as follows. Activates ribosomal RNA transcription. Plays a direct role in upstream activation of rRNA promoters. The chain is DNA-binding protein Fis from Pectobacterium atrosepticum (strain SCRI 1043 / ATCC BAA-672) (Erwinia carotovora subsp. atroseptica).